The following is a 303-amino-acid chain: Elongation factor Ts (303 aa).

The segment at 79 to 82 (TDFT) is involved in Mg(2+) ion dislocation from EF-Tu.

Belongs to the EF-Ts family.

It is found in the cytoplasm. Functionally, associates with the EF-Tu.GDP complex and induces the exchange of GDP to GTP. It remains bound to the aminoacyl-tRNA.EF-Tu.GTP complex up to the GTP hydrolysis stage on the ribosome. In Magnetococcus marinus (strain ATCC BAA-1437 / JCM 17883 / MC-1), this protein is Elongation factor Ts.